Reading from the N-terminus, the 262-residue chain is Type III pantothenate kinase (262 aa).

9-16 (DAGNSRIK) contributes to the ATP binding site. Residues Tyr-96 and 103–106 (GSDR) contribute to the substrate site. Asp-105 (proton acceptor) is an active-site residue. Residue Thr-129 coordinates ATP. A substrate-binding site is contributed by Thr-189.

Belongs to the type III pantothenate kinase family. As to quaternary structure, homodimer. The cofactor is NH4(+). K(+) serves as cofactor.

Its subcellular location is the cytoplasm. The catalysed reaction is (R)-pantothenate + ATP = (R)-4'-phosphopantothenate + ADP + H(+). It participates in cofactor biosynthesis; coenzyme A biosynthesis; CoA from (R)-pantothenate: step 1/5. Functionally, catalyzes the phosphorylation of pantothenate (Pan), the first step in CoA biosynthesis. This chain is Type III pantothenate kinase, found in Burkholderia ambifaria (strain MC40-6).